We begin with the raw amino-acid sequence, 98 residues long: Integration host factor subunit alpha (98 aa).

The interval 49–70 (FGNFDLRDKNQRPGRNPKTGED) is disordered.

The protein belongs to the bacterial histone-like protein family. Heterodimer of an alpha and a beta chain.

Functionally, this protein is one of the two subunits of integration host factor, a specific DNA-binding protein that functions in genetic recombination as well as in transcriptional and translational control. The polypeptide is Integration host factor subunit alpha (Yersinia pestis).